The following is a 146-amino-acid chain: Hemoglobin subunit beta (146 aa).

An N-acetylvaline modification is found at valine 1. In terms of domain architecture, Globin spans 2–146 (HLTDAEKALV…VATALAHKYH (145 aa)). Phosphothreonine is present on threonine 12. At serine 44 the chain carries Phosphoserine. Position 59 is an N6-acetyllysine (lysine 59). Residue histidine 63 participates in heme b binding. The residue at position 82 (lysine 82) is an N6-acetyllysine. Histidine 92 provides a ligand contact to heme b. The residue at position 93 (cysteine 93) is an S-nitrosocysteine. An N6-acetyllysine modification is found at lysine 144.

Belongs to the globin family. In terms of assembly, heterotetramer of two alpha chains and two beta chains. As to expression, red blood cells.

In terms of biological role, involved in oxygen transport from the lung to the various peripheral tissues. The polypeptide is Hemoglobin subunit beta (Peromyscus crinitus (Canyon mouse)).